Here is a 616-residue protein sequence, read N- to C-terminus: Dihydroxy-acid dehydratase (616 aa).

Aspartate 81 lines the Mg(2+) pocket. Cysteine 122 serves as a coordination point for [2Fe-2S] cluster. Mg(2+)-binding residues include aspartate 123 and lysine 124. The residue at position 124 (lysine 124) is an N6-carboxylysine. Cysteine 195 contacts [2Fe-2S] cluster. Position 491 (glutamate 491) interacts with Mg(2+). The active-site Proton acceptor is the serine 517.

Belongs to the IlvD/Edd family. In terms of assembly, homodimer. Requires [2Fe-2S] cluster as cofactor. Mg(2+) serves as cofactor.

The catalysed reaction is (2R)-2,3-dihydroxy-3-methylbutanoate = 3-methyl-2-oxobutanoate + H2O. It carries out the reaction (2R,3R)-2,3-dihydroxy-3-methylpentanoate = (S)-3-methyl-2-oxopentanoate + H2O. It functions in the pathway amino-acid biosynthesis; L-isoleucine biosynthesis; L-isoleucine from 2-oxobutanoate: step 3/4. Its pathway is amino-acid biosynthesis; L-valine biosynthesis; L-valine from pyruvate: step 3/4. Its function is as follows. Functions in the biosynthesis of branched-chain amino acids. Catalyzes the dehydration of (2R,3R)-2,3-dihydroxy-3-methylpentanoate (2,3-dihydroxy-3-methylvalerate) into 2-oxo-3-methylpentanoate (2-oxo-3-methylvalerate) and of (2R)-2,3-dihydroxy-3-methylbutanoate (2,3-dihydroxyisovalerate) into 2-oxo-3-methylbutanoate (2-oxoisovalerate), the penultimate precursor to L-isoleucine and L-valine, respectively. This is Dihydroxy-acid dehydratase from Escherichia coli (strain 55989 / EAEC).